We begin with the raw amino-acid sequence, 227 residues long: Extracellular small neutral protease (227 aa).

The first 29 residues, 1 to 29, serve as a signal peptide directing secretion; sequence MRITLPLLSTAVGLGLTAAVLGTGPAATA. Residues 30-42 constitute a propeptide that is removed on maturation; it reads AAPQEPVRAAQLG. Positions 156 and 158 each coordinate Ca(2+). Residue His163 participates in Zn(2+) binding. Residue Glu164 is part of the active site. Zn(2+) contacts are provided by His167 and Asp173. Residues Cys179 and Cys192 are joined by a disulfide bond.

It belongs to the peptidase M7 family. It depends on Ca(2+) as a cofactor. The cofactor is Zn(2+). Post-translationally, the N-terminus is blocked.

It is found in the secreted. The catalysed reaction is Hydrolyzes proteins with a preference for Tyr or Phe in the P1' position. Has no action on amino-acid p-nitroanilides.. The protein is Extracellular small neutral protease (snpA) of Streptomyces lividans.